A 230-amino-acid chain; its full sequence is Urease accessory protein UreG (230 aa).

Residue 33–40 (GPVGSGKT) coordinates GTP.

It belongs to the SIMIBI class G3E GTPase family. UreG subfamily. Homodimer. UreD, UreF and UreG form a complex that acts as a GTP-hydrolysis-dependent molecular chaperone, activating the urease apoprotein by helping to assemble the nickel containing metallocenter of UreC. The UreE protein probably delivers the nickel.

It is found in the cytoplasm. In terms of biological role, facilitates the functional incorporation of the urease nickel metallocenter. This process requires GTP hydrolysis, probably effectuated by UreG. The sequence is that of Urease accessory protein UreG from Mycobacteroides abscessus (strain ATCC 19977 / DSM 44196 / CCUG 20993 / CIP 104536 / JCM 13569 / NCTC 13031 / TMC 1543 / L948) (Mycobacterium abscessus).